The chain runs to 203 residues: Leucyl/phenylalanyl-tRNA--protein transferase (203 aa).

The protein belongs to the L/F-transferase family.

It is found in the cytoplasm. The catalysed reaction is N-terminal L-lysyl-[protein] + L-leucyl-tRNA(Leu) = N-terminal L-leucyl-L-lysyl-[protein] + tRNA(Leu) + H(+). It catalyses the reaction N-terminal L-arginyl-[protein] + L-leucyl-tRNA(Leu) = N-terminal L-leucyl-L-arginyl-[protein] + tRNA(Leu) + H(+). It carries out the reaction L-phenylalanyl-tRNA(Phe) + an N-terminal L-alpha-aminoacyl-[protein] = an N-terminal L-phenylalanyl-L-alpha-aminoacyl-[protein] + tRNA(Phe). Functionally, functions in the N-end rule pathway of protein degradation where it conjugates Leu, Phe and, less efficiently, Met from aminoacyl-tRNAs to the N-termini of proteins containing an N-terminal arginine or lysine. In Chelativorans sp. (strain BNC1), this protein is Leucyl/phenylalanyl-tRNA--protein transferase.